The following is a 169-amino-acid chain: Transcription antitermination protein NusB (169 aa).

This sequence belongs to the NusB family.

Functionally, involved in transcription antitermination. Required for transcription of ribosomal RNA (rRNA) genes. Binds specifically to the boxA antiterminator sequence of the ribosomal RNA (rrn) operons. This Rhodococcus opacus (strain B4) protein is Transcription antitermination protein NusB.